The sequence spans 184 residues: Ribosome-recycling factor (184 aa).

It belongs to the RRF family.

The protein resides in the cytoplasm. Responsible for the release of ribosomes from messenger RNA at the termination of protein biosynthesis. May increase the efficiency of translation by recycling ribosomes from one round of translation to another. The protein is Ribosome-recycling factor of Aster yellows witches'-broom phytoplasma (strain AYWB).